We begin with the raw amino-acid sequence, 188 residues long: Elongation factor P (188 aa).

It belongs to the elongation factor P family.

It localises to the cytoplasm. It functions in the pathway protein biosynthesis; polypeptide chain elongation. Involved in peptide bond synthesis. Stimulates efficient translation and peptide-bond synthesis on native or reconstituted 70S ribosomes in vitro. Probably functions indirectly by altering the affinity of the ribosome for aminoacyl-tRNA, thus increasing their reactivity as acceptors for peptidyl transferase. This is Elongation factor P from Rhodopseudomonas palustris (strain BisB5).